We begin with the raw amino-acid sequence, 467 residues long: Cysteine protease ATG4a (467 aa).

Positions 1 to 35 (MKALCDRFVPQQCSSSSKSDTHDKSPLVSDSGPSD) are disordered. Cys-170 (nucleophile) is an active-site residue. Residues Asp-364 and His-366 contribute to the active site. Residues 448–467 (NYGFADDDSEDEREDDWQML) are disordered. The segment covering 452 to 467 (ADDDSEDEREDDWQML) has biased composition (acidic residues).

Belongs to the peptidase C54 family. Interacts with ATG8. As to expression, constitutively expressed.

The protein resides in the cytoplasm. It carries out the reaction [protein]-C-terminal L-amino acid-glycyl-phosphatidylethanolamide + H2O = [protein]-C-terminal L-amino acid-glycine + a 1,2-diacyl-sn-glycero-3-phosphoethanolamine. Cysteine protease that plays a key role in autophagy by mediating both proteolytic activation and delipidation of ATG8 family proteins. The protease activity is required for proteolytic activation of ATG8 family proteins: cleaves the C-terminal amino acid of ATG8 proteins to reveal a C-terminal glycine. Exposure of the glycine at the C-terminus is essential for ATG8 proteins conjugation to phosphatidylethanolamine (PE) and insertion to membranes, which is necessary for autophagy. In addition to the protease activity, also mediates delipidation of PE-conjugated ATG8 proteins. The sequence is that of Cysteine protease ATG4a from Arabidopsis thaliana (Mouse-ear cress).